A 512-amino-acid polypeptide reads, in one-letter code: D-alanine--D-alanyl carrier protein ligase (512 aa).

Thr-152 to Ser-153 lines the ATP pocket. Residue Asp-199 coordinates D-alanine. Asn-294–Thr-299 serves as a coordination point for ATP. D-alanine is bound at residue Val-303. Residues Asp-385, Tyr-397–Arg-400, and Lys-499 contribute to the ATP site. Position 499 (Lys-499) interacts with D-alanine.

Belongs to the ATP-dependent AMP-binding enzyme family. DltA subfamily.

The protein localises to the cytoplasm. It carries out the reaction holo-[D-alanyl-carrier protein] + D-alanine + ATP = D-alanyl-[D-alanyl-carrier protein] + AMP + diphosphate. The protein operates within cell wall biogenesis; lipoteichoic acid biosynthesis. Catalyzes the first step in the D-alanylation of lipoteichoic acid (LTA), the activation of D-alanine and its transfer onto the D-alanyl carrier protein (Dcp) DltC. In an ATP-dependent two-step reaction, forms a high energy D-alanyl-AMP intermediate, followed by transfer of the D-alanyl residue as a thiol ester to the phosphopantheinyl prosthetic group of the Dcp. D-alanylation of LTA plays an important role in modulating the properties of the cell wall in Gram-positive bacteria, influencing the net charge of the cell wall. The polypeptide is D-alanine--D-alanyl carrier protein ligase (Streptococcus equi subsp. equi (strain 4047)).